A 101-amino-acid chain; its full sequence is Osteocalcin (101 aa).

Residues 1 to 19 (MKLAILTVLLLGAAVLCLG) form the signal peptide. The propeptide occupies 20 to 52 (SKDADHSNSVGESHSSEAFISRQESASFARLKR). In terms of domain architecture, Gla spans 53–99 (SYGNNVGQGAAVGSPLESQREVCELNPDCDELADHIGFQEAYRRFYG). 4 residues coordinate Ca(2+): glutamate 69, glutamate 73, glutamate 76, and aspartate 82. Residues glutamate 69, glutamate 73, and glutamate 76 each carry the 4-carboxyglutamate modification. A disulfide bond links cysteine 75 and cysteine 81.

This sequence belongs to the osteocalcin/matrix Gla protein family. In terms of processing, gamma-carboxyglutamate residues are formed by vitamin K dependent carboxylation by GGCX. These residues are essential for the binding of calcium.

Its subcellular location is the secreted. In terms of biological role, the carboxylated form is one of the main organic components of the bone matrix, which constitutes 1-2% of the total bone protein. The carboxylated form binds strongly to apatite and calcium. The polypeptide is Osteocalcin (bglap) (Xenopus laevis (African clawed frog)).